The primary structure comprises 209 residues: Uracil phosphoribosyltransferase (209 aa).

5-phospho-alpha-D-ribose 1-diphosphate is bound by residues R79, R104, and 131–139 (DPMLATGGS). Uracil is bound by residues I194 and 199-201 (GDA). D200 provides a ligand contact to 5-phospho-alpha-D-ribose 1-diphosphate.

Belongs to the UPRTase family. Requires Mg(2+) as cofactor.

The enzyme catalyses UMP + diphosphate = 5-phospho-alpha-D-ribose 1-diphosphate + uracil. It functions in the pathway pyrimidine metabolism; UMP biosynthesis via salvage pathway; UMP from uracil: step 1/1. With respect to regulation, allosterically activated by GTP. Catalyzes the conversion of uracil and 5-phospho-alpha-D-ribose 1-diphosphate (PRPP) to UMP and diphosphate. This chain is Uracil phosphoribosyltransferase, found in Clostridium acetobutylicum (strain ATCC 824 / DSM 792 / JCM 1419 / IAM 19013 / LMG 5710 / NBRC 13948 / NRRL B-527 / VKM B-1787 / 2291 / W).